The following is a 394-amino-acid chain: Cell division protein FtsZ (394 aa).

Residues glycine 21 to asparagine 25, arginine 29, glycine 108 to glycine 110, glutamate 139, arginine 143, asparagine 166, and aspartate 187 each bind GTP. The segment at aspartate 317–arginine 394 is disordered. 2 stretches are compositionally biased toward low complexity: residues serine 328–serine 346 and serine 353–serine 364. The span at valine 365–arginine 388 shows a compositional bias: basic and acidic residues.

Belongs to the FtsZ family. As to quaternary structure, homodimer. Polymerizes to form a dynamic ring structure in a strictly GTP-dependent manner. Interacts directly with several other division proteins.

It localises to the cytoplasm. Essential cell division protein that forms a contractile ring structure (Z ring) at the future cell division site. The regulation of the ring assembly controls the timing and the location of cell division. One of the functions of the FtsZ ring is to recruit other cell division proteins to the septum to produce a new cell wall between the dividing cells. Binds GTP and shows GTPase activity. The polypeptide is Cell division protein FtsZ (Staphylococcus epidermidis (strain ATCC 35984 / DSM 28319 / BCRC 17069 / CCUG 31568 / BM 3577 / RP62A)).